Consider the following 372-residue polypeptide: Serine protease 44 (372 aa).

A signal peptide spans 1–25; it reads MAFQGCDCFGLLVWLLLLQTRLGKA. Topologically, residues 26–351 are extracellular; it reads RMVPGTPSLS…KELSRASCWK (326 aa). Positions 31 to 72 are disordered; sequence TPSLSPLPSENGLDDSGVNPQERPLTGMPETSLPRKPGDSTR. In terms of domain architecture, Peptidase S1 spans 112–345; sequence IVGGRPAPAR…YRDWIIKELS (234 aa). Cys137 and Cys153 are oxidised to a cystine. Active-site charge relay system residues include His152 and Asp197. N-linked (GlcNAc...) asparagine glycosylation is present at Asn208. 3 cysteine pairs are disulfide-bonded: Cys231–Cys303, Cys262–Cys283, and Cys293–Cys321. Ser297 (charge relay system) is an active-site residue. The chain crosses the membrane as a helical span at residues 352–372; that stretch reads LSGFLVLSVCLVLHLAIVVAL.

The protein belongs to the peptidase S1 family. Testis-specific. Expressed by primary and secondary spermatocytes.

The protein resides in the membrane. It is found in the cytoplasm. Functionally, lacks protease activity in vitro. In Mus musculus (Mouse), this protein is Serine protease 44.